The sequence spans 115 residues: NADH-ubiquinone oxidoreductase chain 3 (115 aa).

3 consecutive transmembrane segments (helical) span residues 4–24 (LMVM…AFWL), 55–75 (FFLV…LLPL), and 87–107 (MMLT…YEWM).

The protein belongs to the complex I subunit 3 family. As to quaternary structure, core subunit of respiratory chain NADH dehydrogenase (Complex I) which is composed of 45 different subunits. Interacts with TMEM186. Interacts with TMEM242.

The protein localises to the mitochondrion inner membrane. The enzyme catalyses a ubiquinone + NADH + 5 H(+)(in) = a ubiquinol + NAD(+) + 4 H(+)(out). Functionally, core subunit of the mitochondrial membrane respiratory chain NADH dehydrogenase (Complex I) which catalyzes electron transfer from NADH through the respiratory chain, using ubiquinone as an electron acceptor. Essential for the catalytic activity of complex I. This Peromyscus mexicanus (Mexican deer mouse) protein is NADH-ubiquinone oxidoreductase chain 3.